The following is a 149-amino-acid chain: MAGTEISAITTKLLEAKKAKGITFADLEQLLGRDEVWIAAVIYRQASASVDEAEKLLHCLGLSDDLVPELTAPSVKGLGPVVPTDPLIYRFYEIMQVYGMPMKEVIHEKFGDGIMSAIDFTLDIEKEADPKGDRVKVTMNGKFLPYKKW.

Active-site residues include Arg-90, Glu-93, and Ser-116.

Belongs to the cyanase family.

The catalysed reaction is cyanate + hydrogencarbonate + 3 H(+) = NH4(+) + 2 CO2. Its function is as follows. Catalyzes the reaction of cyanate with bicarbonate to produce ammonia and carbon dioxide. This chain is Cyanate hydratase, found in Synechocystis sp. (strain ATCC 27184 / PCC 6803 / Kazusa).